The sequence spans 214 residues: Phosphoheptose isomerase (214 aa).

Residues 51–209 enclose the SIS domain; sequence IASTFEDGGK…IDLVERLLGY (159 aa). Substrate is bound at residue 66–68; it reads NGG. Zn(2+) contacts are provided by H75 and E79. Substrate contacts are provided by residues E79, 110-111, 136-138, S141, and Q189; these read ND and STS. Q189 and H197 together coordinate Zn(2+).

The protein belongs to the SIS family. GmhA subfamily. Requires Zn(2+) as cofactor.

It is found in the cytoplasm. The enzyme catalyses 2 D-sedoheptulose 7-phosphate = D-glycero-alpha-D-manno-heptose 7-phosphate + D-glycero-beta-D-manno-heptose 7-phosphate. It functions in the pathway carbohydrate biosynthesis; D-glycero-D-manno-heptose 7-phosphate biosynthesis; D-glycero-alpha-D-manno-heptose 7-phosphate and D-glycero-beta-D-manno-heptose 7-phosphate from sedoheptulose 7-phosphate: step 1/1. Catalyzes the isomerization of sedoheptulose 7-phosphate in D-glycero-D-manno-heptose 7-phosphate. This Chlorobium limicola (strain DSM 245 / NBRC 103803 / 6330) protein is Phosphoheptose isomerase.